We begin with the raw amino-acid sequence, 609 residues long: MVKILGVKYFLHDSGVFYIDTKNKEIFGILTERVTRIKHDGGTVIPILNEYPKLKNIDYVAYPFEQTNLDFILFKHIDDYIKRTYKPKYIKEYAKYKKELSQNKTKFVLNNIYRPFIWEILAVYGLRKLLFKRFNNIYNKLGNLAIKRELKKIFRKDVSLYEHHLCHAASAYYFSPFFPKETLVFTLDGIGDWKYHSLWLFKEYDYRLVSYSSFDIICYDDVEGIFKGASIGHIYSLFTEILGFTPNSDEGKTEALAAYGKPNGELYNLLKKGYKINKEKLRWEHDINILKKLHNKQYLQKWKEKIGDENFAATIQRWLEDTVVEYLNIVYEKFKIQRLAMAGGVVANVIMNLNIFERTPFEELYIFPAMGDDGVAAGAAILKAVELGEDISWLKDLEMPYWGPNYSREDVEKELKKDKWKDKITYEYIGEKWPEIAAEMIAKGNIIAVYQGKMEFGPRALGNRSILADPRDPKTRDKINSTVKRRPWFQPFCPSVLEEERERLFEKSYKHKHMAIAFRMKKEFWDKLPSAMHIDGTARPQFVEEKDNPNYYRLLKKFKEITGYGIVINTSFNLHGRTIVRTPEDAITDFIDCNIDAMFIEGYLVKRKI.

Belongs to the NodU/CmcH family.

This is an uncharacterized protein from Methanocaldococcus jannaschii (strain ATCC 43067 / DSM 2661 / JAL-1 / JCM 10045 / NBRC 100440) (Methanococcus jannaschii).